We begin with the raw amino-acid sequence, 58 residues long: ATP synthase F(0) complex subunit k, mitochondrial (58 aa).

N6-acetyllysine occurs at positions 16 and 17. Residues 23 to 45 (TLTGRMNCVLATYGSIALIVLYF) traverse the membrane as a helical segment.

In terms of assembly, component of the ATP synthase complex composed at least of ATP5F1A/subunit alpha, ATP5F1B/subunit beta, ATP5MC1/subunit c (homooctomer), MT-ATP6/subunit a, MT-ATP8/subunit 8, ATP5ME/subunit e, ATP5MF/subunit f, ATP5MG/subunit g, ATP5MK/subunit k, ATP5MJ/subunit j, ATP5F1C/subunit gamma, ATP5F1D/subunit delta, ATP5F1E/subunit epsilon, ATP5PF/subunit F6, ATP5PB/subunit b, ATP5PD/subunit d, ATP5PO/subunit OSCP. ATP synthase complex consists of a soluble F(1) head domain (subunits alpha(3) and beta(3)) - the catalytic core - and a membrane F(0) domain - the membrane proton channel (subunits c, a, 8, e, f, g, k and j). These two domains are linked by a central stalk (subunits gamma, delta, and epsilon) rotating inside the F1 region and a stationary peripheral stalk (subunits F6, b, d, and OSCP). The ATP synthase complex/complex V exists as a monomeric and a dimeric supercomplex that helps shape mitochondrial cristae to optimize proton flow.

The protein localises to the mitochondrion membrane. Its function is as follows. Subunit k, of the mitochondrial membrane ATP synthase complex (F(1)F(0) ATP synthase or Complex V) that produces ATP from ADP in the presence of a proton gradient across the membrane which is generated by electron transport complexes of the respiratory chain. ATP synthase complex consist of a soluble F(1) head domain - the catalytic core - and a membrane F(1) domain - the membrane proton channel. These two domains are linked by a central stalk rotating inside the F(1) region and a stationary peripheral stalk. During catalysis, ATP synthesis in the catalytic domain of F(1) is coupled via a rotary mechanism of the central stalk subunits to proton translocation. In vivo, can only synthesize ATP although its ATP hydrolase activity can be activated artificially in vitro. Part of the complex F(0) domain. Required for dimerization of the ATP synthase complex and as such regulates ATP synthesis in the mitochondria. This is ATP synthase F(0) complex subunit k, mitochondrial from Homo sapiens (Human).